A 940-amino-acid chain; its full sequence is Isoleucine--tRNA ligase (940 aa).

The short motif at 58-68 (PYANGSIHIGH) is the 'HIGH' region element. L-isoleucyl-5'-AMP is bound at residue glutamate 564. The 'KMSKS' region motif lies at 605 to 609 (KMSKS). Lysine 608 is an ATP binding site. Zn(2+) is bound by residues cysteine 903, cysteine 906, cysteine 923, and cysteine 926.

Belongs to the class-I aminoacyl-tRNA synthetase family. IleS type 1 subfamily. In terms of assembly, monomer. The cofactor is Zn(2+).

The protein resides in the cytoplasm. The enzyme catalyses tRNA(Ile) + L-isoleucine + ATP = L-isoleucyl-tRNA(Ile) + AMP + diphosphate. Its function is as follows. Catalyzes the attachment of isoleucine to tRNA(Ile). As IleRS can inadvertently accommodate and process structurally similar amino acids such as valine, to avoid such errors it has two additional distinct tRNA(Ile)-dependent editing activities. One activity is designated as 'pretransfer' editing and involves the hydrolysis of activated Val-AMP. The other activity is designated 'posttransfer' editing and involves deacylation of mischarged Val-tRNA(Ile). The sequence is that of Isoleucine--tRNA ligase from Shewanella baltica (strain OS155 / ATCC BAA-1091).